We begin with the raw amino-acid sequence, 93 residues long: Consomatin G2 (93 aa).

Positions 1–18 are cleaved as a signal peptide; that stretch reads MQTAYWVMLMMMVCITAP. Residues 19–69 constitute a propeptide that is removed on maturation; the sequence is LPEGGKPNSGIRGLVPNDLTPQHTLRSLISRRQTDVLLDATLLTTPAPEQR. Cys72 and Cys77 are oxidised to a cystine. D-tryptophan is present on Trp74. The propeptide occupies 79–93; it reads WRPYPWRRRDLNGKR.

The protein belongs to the conotoxin C superfamily. Consomatin family. Expressed by the venom duct.

Its subcellular location is the secreted. Moderately activates human somatostatin receptors (SSTR) with a preferential activation of SSTR1 and SSTR4. In vivo, does not cause behavioral changes in mice within a few minutes of intracranial injection, but causes a progressive loss of movement thereafter. Four to five hours after injection, mice recover, even with the highest dose tested. Shows antinociception and antihyperalgesia activities in two mouse models of acute pain, most probably by acting outside the central nervous system. The sequence is that of Consomatin G2 from Conus geographus (Geography cone).